A 417-amino-acid polypeptide reads, in one-letter code: Putative UDP-arabinose 4-epimerase 2 (417 aa).

The Cytoplasmic segment spans residues 1–31 (MLNLGRARTGRQNRSMSFEGLDFADPKKNNN). Residues 32–54 (YMGKIVLVMTLTAMCILLLNQSP) traverse the membrane as a helical; Signal-anchor for type II membrane protein segment. The Lumenal portion of the chain corresponds to 55–417 (TFNTPSVFSR…YGSSSLVSAY (363 aa)). 71-102 (HVLVTGGAGYIGSHAALRLLKDSYRVTIVDNL) lines the NAD(+) pocket. Catalysis depends on Tyr-219, which acts as the Proton acceptor.

Belongs to the NAD(P)-dependent epimerase/dehydratase family. The cofactor is NAD(+).

The protein resides in the golgi apparatus. Its subcellular location is the golgi stack membrane. The catalysed reaction is UDP-beta-L-arabinopyranose = UDP-alpha-D-xylose. Its pathway is nucleotide-sugar biosynthesis; UDP-L-arabinose biosynthesis; UDP-L-arabinose from UDP-alpha-D-xylose: step 1/1. It participates in cell wall biogenesis; cell wall polysaccharide biosynthesis. The protein is Putative UDP-arabinose 4-epimerase 2 of Arabidopsis thaliana (Mouse-ear cress).